Consider the following 652-residue polypeptide: Epithelial sodium channel subunit gamma (652 aa).

Residues 1-54 are Cytoplasmic-facing; sequence MAPGEKIKAKIKKNLPVTGPQAPNIKELMQWYCLNTNTHGCRRIVVSRGRLRRL. A helical membrane pass occupies residues 55–75; it reads LWILFTLTAVALIFWQCALLI. Residues 76–537 lie on the Extracellular side of the membrane; sequence SSFYTVSVSI…EQLLSNIGGQ (462 aa). Disulfide bonds link Cys-100-Cys-286, Cys-210-Cys-217, Cys-263-Cys-270, Cys-375-Cys-460, Cys-397-Cys-456, Cys-401-Cys-452, Cys-410-Cys-437, and Cys-412-Cys-426. Residues 137–224 form a gating release of inhibition by proteolysis (GRIP); protease-sensitive region that is responsible for the proteolytic activation of the channel region; that stretch reads RKRREAQSWS…SDCAVYTFSS (88 aa). N-linked (GlcNAc...) asparagine glycosylation is present at Asn-212. Asn-500 carries an N-linked (GlcNAc...) asparagine glycan. A helical transmembrane segment spans residues 538-558; the sequence is LGLWMSCSVVCVIEIIEVFFI. The Cytoplasmic segment spans residues 559-652; the sequence is DSLSIIARHQ…LTDTQTTFPH (94 aa). Residues 610 to 631 are disordered; that stretch reads SALSLPPAPGSQVPGTPPPRYN. Residues 626 to 630 carry the PY motif; recruits WW domain-containing proteins and is thereby required for ubiquitination and inhibition of the channel by NEDD4 and NEDD4L motif; that stretch reads PPPRY.

Belongs to the amiloride-sensitive sodium channel (TC 1.A.6) family. SCNN1G subfamily. As to quaternary structure, component of the heterotrimeric epithelial sodium channel (ENaC) composed of an alpha/SCNN1A, a beta/SCNN1B and a gamma/SCNN1G subunit. An additional delta/SCNN1D subunit can replace the alpha/SCNN1A subunit to form an alternative channel with specific properties. Interacts with WWP1 (via WW domains). Interacts with WWP2 (via WW domains); inhibits the channel. Interacts with the full-length immature form of PCSK9 (pro-PCSK9); inhibits ENaC by promoting its proteasomal degradation. Interacts with BPIFA1; the interaction is indirect via SCNN1B and inhibits the proteolytic maturation of SCNN1A and SCNN1G and the activation of ENaC. Post-translationally, phosphorylated on serine and threonine residues. Aldosterone and insulin increase the basal level of phosphorylation. In terms of processing, ubiquitinated. Can be ubiquitinated at multiple sites and undergo monoubiquitination and polyubiquitination. Ubiquitination by NEDD4 or NEDD4L inhibits the ENaC channel through endocytosis, intracellular retention and degradation of its individual subunits. ENaC is activated through the proteolytic maturation of its subunits. Furin cleaves the SCNN1G subunit first, followed by cleavage by prostasin (PRSS8), which results in a stepwise increase in the open probability of the channel due to the release of an inhibitory tract. BPIFA1, which is recruited by the SCNN1B subunit, prevents the proteolytic activation of ENaC. Post-translationally, N-glycosylated. N-linked glycans are processed to complex type during ENaC complex assembly and transport to the plasma membrane.

Its subcellular location is the apical cell membrane. It catalyses the reaction Na(+)(in) = Na(+)(out). Originally identified and characterized by its inhibition by the diuretic drug amiloride. This is one of the three pore-forming subunits of the heterotrimeric epithelial sodium channel (ENaC), a critical regulator of sodium balance and fluid homeostasis. ENaC operates in epithelial tissues, where it mediates the electrodiffusion of sodium ions from extracellular fluid through the apical membrane of cells, with water following osmotically. It plays a key role in maintaining sodium homeostasis through electrogenic sodium reabsorption in the kidneys. Additionally, ENaC is essential for airway surface liquid homeostasis, which is crucial for proper mucus clearance. This Bos taurus (Bovine) protein is Epithelial sodium channel subunit gamma.